A 394-amino-acid polypeptide reads, in one-letter code: 3-ketosteroid-9-alpha-monooxygenase, oxygenase component (394 aa).

The Rieske domain maps to 27-129 (WHCLGLAKDF…TLDQDGLLFV (103 aa)). [2Fe-2S] cluster is bound by residues Cys-68, His-70, Cys-87, and His-90. 3 residues coordinate Fe cation: Asn-175, His-181, and His-186. A substrate-binding site is contributed by Tyr-245. Asp-305 provides a ligand contact to Fe cation.

In terms of assembly, homotrimer. The two-component system 3-ketosteroid-9-alpha-monooxygenase is composed of an oxygenase component KshA and a reductase component KshB. Requires [2Fe-2S] cluster as cofactor. Fe cation is required as a cofactor.

The catalysed reaction is androsta-1,4-diene-3,17-dione + 2 reduced [2Fe-2S]-[ferredoxin] + O2 + 2 H(+) = 9alpha-hydroxyandrosta-1,4-diene-3,17-dione + 2 oxidized [2Fe-2S]-[ferredoxin] + H2O. May be involved in the degradation of cholic acid, a steroid acid found predominantly in the bile. In vitro, catalyzes the introduction of a 9alpha-hydroxyl moiety into the ring B of 3-ketosteroid substrates such as 1,4-androstadiene-3,17-dione (ADD), 4-androstene-3,17-dione (AD), 4-androstene-17beta-ol-3-one (testosterone), 4-pregnene-3,20-dione (progesterone), 3-oxo-23,24-bisnorcholesta-4-en-22-oate (4-BNC), 23,24-bisnorcholesta-4-ene-22-oate, 3-oxo-23,24-bisnorcholaesta-1,4-dien-22-oate (1,4-BNC), 23,24-bisnorcholesta-1,4-diene-22-oate and 3-oxo-23,24-bisnorcholesta-1,4-dien-22-oyl-coenzyme A thioester (1,4-BNC-CoA). KshA1 has the highest specificity for steroids possessing an isopropionyl side chain at C17. This chain is 3-ketosteroid-9-alpha-monooxygenase, oxygenase component, found in Rhodococcus rhodochrous.